A 217-amino-acid polypeptide reads, in one-letter code: Ribonuclease HII (217 aa).

The RNase H type-2 domain occupies 27 to 216 (RTIAGIDEAG…VREHLGESRC (190 aa)). 3 residues coordinate a divalent metal cation: D33, E34, and D125.

It belongs to the RNase HII family. The cofactor is Mn(2+). Mg(2+) serves as cofactor.

It localises to the cytoplasm. It catalyses the reaction Endonucleolytic cleavage to 5'-phosphomonoester.. Its function is as follows. Endonuclease that specifically degrades the RNA of RNA-DNA hybrids. This chain is Ribonuclease HII, found in Geobacter sulfurreducens (strain ATCC 51573 / DSM 12127 / PCA).